Here is a 79-residue protein sequence, read N- to C-terminus: MENLNMDLLYMAAAVMMGLAAIGAAIGIGILGGKFLEGAARQPDLIPLLRTQFFIVMGLVDAIPMIAVGLGLYVMFAVA.

2 helical membrane passes run 11–31 and 53–73; these read MAAA…IGIL and FFIV…LGLY.

This sequence belongs to the ATPase C chain family. As to quaternary structure, F-type ATPases have 2 components, F(1) - the catalytic core - and F(0) - the membrane proton channel. F(1) has five subunits: alpha(3), beta(3), gamma(1), delta(1), epsilon(1). F(0) has three main subunits: a(1), b(2) and c(10-14). The alpha and beta chains form an alternating ring which encloses part of the gamma chain. F(1) is attached to F(0) by a central stalk formed by the gamma and epsilon chains, while a peripheral stalk is formed by the delta and b chains.

It localises to the cell inner membrane. Functionally, f(1)F(0) ATP synthase produces ATP from ADP in the presence of a proton or sodium gradient. F-type ATPases consist of two structural domains, F(1) containing the extramembraneous catalytic core and F(0) containing the membrane proton channel, linked together by a central stalk and a peripheral stalk. During catalysis, ATP synthesis in the catalytic domain of F(1) is coupled via a rotary mechanism of the central stalk subunits to proton translocation. Its function is as follows. Key component of the F(0) channel; it plays a direct role in translocation across the membrane. A homomeric c-ring of between 10-14 subunits forms the central stalk rotor element with the F(1) delta and epsilon subunits. The chain is ATP synthase subunit c from Citrobacter koseri (strain ATCC BAA-895 / CDC 4225-83 / SGSC4696).